The primary structure comprises 365 residues: Isopentenyl-diphosphate delta-isomerase (365 aa).

4–5 (RK) serves as a coordination point for substrate. Residues 62–64 (GMT), S92, and N121 each bind FMN. 92–94 (SQR) is a substrate binding site. Residue Q155 participates in substrate binding. A Mg(2+)-binding site is contributed by E156. Residues K187, T216, 267–269 (GVR), and 288–289 (AL) each bind FMN.

This sequence belongs to the IPP isomerase type 2 family. In terms of assembly, homooctamer. Dimer of tetramers. FMN serves as cofactor. Requires NADPH as cofactor. Mg(2+) is required as a cofactor.

It is found in the cytoplasm. The catalysed reaction is isopentenyl diphosphate = dimethylallyl diphosphate. Its function is as follows. Involved in the biosynthesis of isoprenoids. Catalyzes the 1,3-allylic rearrangement of the homoallylic substrate isopentenyl (IPP) to its allylic isomer, dimethylallyl diphosphate (DMAPP). This chain is Isopentenyl-diphosphate delta-isomerase, found in Methanopyrus kandleri (strain AV19 / DSM 6324 / JCM 9639 / NBRC 100938).